A 130-amino-acid polypeptide reads, in one-letter code: Small ribosomal subunit protein uS9 (130 aa).

Belongs to the universal ribosomal protein uS9 family.

The sequence is that of Small ribosomal subunit protein uS9 (rpsI) from Geobacillus stearothermophilus (Bacillus stearothermophilus).